Here is a 151-residue protein sequence, read N- to C-terminus: Ribonuclease H (151 aa).

In terms of domain architecture, RNase H type-1 spans 1–146 (MPDLYAYTDG…ADELARAGMA (146 aa)). Positions 9, 52, 74, and 138 each coordinate Mg(2+).

It belongs to the RNase H family. Monomer. Requires Mg(2+) as cofactor.

It localises to the cytoplasm. It catalyses the reaction Endonucleolytic cleavage to 5'-phosphomonoester.. Its function is as follows. Endonuclease that specifically degrades the RNA of RNA-DNA hybrids. The protein is Ribonuclease H of Cereibacter sphaeroides (strain ATCC 17029 / ATH 2.4.9) (Rhodobacter sphaeroides).